The sequence spans 1231 residues: ATP-dependent RNA helicase DHX30 (1231 aa).

The disordered stretch occupies residues 39–65 (PDGLEGARQEDEEEQPPPPGAEEQSTA). 2 DRBM domains span residues 80 to 148 (PKNL…CQLF) and 292 to 359 (PKNL…CQKL). The 169-residue stretch at 488 to 656 (LSAIEQNPVV…FGGCPVVKVP (169 aa)) folds into the Helicase ATP-binding domain. 501-508 (GDTGCGKT) is an ATP binding site. A DEAH box motif is present at residues 603 to 606 (DEVH). In terms of domain architecture, Helicase C-terminal spans 697–870 (LITDLVLQID…NLVVQAKIHM (174 aa)).

The protein belongs to the DEAD box helicase family. DEAH subfamily.

The protein resides in the cytoplasm. The protein localises to the mitochondrion. It is found in the mitochondrion matrix. Its subcellular location is the mitochondrion nucleoid. It carries out the reaction ATP + H2O = ADP + phosphate + H(+). Functionally, RNA-dependent helicase. Plays an important role in the assembly of the mitochondrial large ribosomal subunit. Required for optimal function of the zinc-finger antiviral protein ZC3HAV1. Associates with mitochondrial DNA. Involved in nervous system development and differentiation through its involvement in the up-regulation of a number of genes which are required for neurogenesis, including GSC, NCAM1, neurogenin, and NEUROD. In Gallus gallus (Chicken), this protein is ATP-dependent RNA helicase DHX30 (DHX30).